A 298-amino-acid polypeptide reads, in one-letter code: Ectoine dioxygenase (298 aa).

Residues 1–18 (MLQQAIDRDPVDRIDRYP) show a composition bias toward basic and acidic residues. The interval 1 to 26 (MLQQAIDRDPVDRIDRYPTRTAEPAP) is disordered. Gln133 serves as a coordination point for L-ectoine. The Fe cation site is built by His150, Asp152, and His251.

Belongs to the PhyH family. EctD subfamily. As to quaternary structure, homodimer. Fe(2+) serves as cofactor.

It carries out the reaction L-ectoine + 2-oxoglutarate + O2 = 5-hydroxyectoine + succinate + CO2. In terms of biological role, involved in the biosynthesis of 5-hydroxyectoine, called compatible solute, which helps organisms to survive extreme osmotic stress by acting as a highly soluble organic osmolyte. Catalyzes the 2-oxoglutarate-dependent selective hydroxylation of L-ectoine to yield (4S,5S)-5-hydroxyectoine. This Nocardia farcinica (strain IFM 10152) protein is Ectoine dioxygenase.